Consider the following 263-residue polypeptide: EMVDYYVGIGANGLEMDVSFDSNGKAEYTYHGVPCDCFRSCTRSEKFSVYLDYVRQITTPGNPKFRENLIFLIMDLKLNDLEPHALYNAGIDIADQLSKNYWKDDGKARAHFLISIPYVSQTAFVDGFRWWFEKKGLEKYYEKIGWDFSANEDLNSIQATYQKLNITGHTWQSDGITNCLTRGTERLTQAIQKRDTPGNSYLNKVYAWSLDKYGSIKQALDLGVDGVMSNYPQRMVEILSEGTYLERFRLATYEDNPWETFKQ.

Mg(2+) contacts are provided by Glu-15 and Asp-17. The active-site Nucleophile is His-31. Disulfide bonds link Cys-35/Cys-41 and Cys-37/Cys-179. Asp-75 lines the Mg(2+) pocket.

The protein belongs to the arthropod phospholipase D family. Class II subfamily. Mg(2+) is required as a cofactor. In terms of tissue distribution, expressed by the venom gland.

The protein localises to the secreted. The enzyme catalyses an N-(acyl)-sphingosylphosphocholine = an N-(acyl)-sphingosyl-1,3-cyclic phosphate + choline. It catalyses the reaction an N-(acyl)-sphingosylphosphoethanolamine = an N-(acyl)-sphingosyl-1,3-cyclic phosphate + ethanolamine. It carries out the reaction a 1-acyl-sn-glycero-3-phosphocholine = a 1-acyl-sn-glycero-2,3-cyclic phosphate + choline. The catalysed reaction is a 1-acyl-sn-glycero-3-phosphoethanolamine = a 1-acyl-sn-glycero-2,3-cyclic phosphate + ethanolamine. Its function is as follows. Dermonecrotic toxins cleave the phosphodiester linkage between the phosphate and headgroup of certain phospholipids (sphingolipid and lysolipid substrates), forming an alcohol (often choline) and a cyclic phosphate. This toxin acts on sphingomyelin (SM). It may also act on ceramide phosphoethanolamine (CPE), lysophosphatidylcholine (LPC) and lysophosphatidylethanolamine (LPE), but not on lysophosphatidylserine (LPS), and lysophosphatidylglycerol (LPG). It acts by transphosphatidylation, releasing exclusively cyclic phosphate products as second products. Induces dermonecrosis, hemolysis, increased vascular permeability, edema, inflammatory response, and platelet aggregation. The polypeptide is Dermonecrotic toxin SpaSicTox-betaIF1 (Sicarius patagonicus (Six-eyed sand spider)).